The chain runs to 431 residues: Asparagine--tRNA ligase 1 (431 aa).

This sequence belongs to the class-II aminoacyl-tRNA synthetase family. As to quaternary structure, homodimer.

The protein resides in the cytoplasm. The catalysed reaction is tRNA(Asn) + L-asparagine + ATP = L-asparaginyl-tRNA(Asn) + AMP + diphosphate + H(+). This Lactiplantibacillus plantarum (strain ATCC BAA-793 / NCIMB 8826 / WCFS1) (Lactobacillus plantarum) protein is Asparagine--tRNA ligase 1 (asnS1).